The sequence spans 158 residues: UPF0311 protein CA_C3321 (158 aa).

The protein belongs to the UPF0311 family.

The protein is UPF0311 protein CA_C3321 of Clostridium acetobutylicum (strain ATCC 824 / DSM 792 / JCM 1419 / IAM 19013 / LMG 5710 / NBRC 13948 / NRRL B-527 / VKM B-1787 / 2291 / W).